We begin with the raw amino-acid sequence, 88 residues long: Small ribosomal subunit protein uS15 (88 aa).

A compositionally biased stretch (polar residues) spans 1–20 (MLTTQDKQNIIKENQQSEGD). A disordered region spans residues 1-24 (MLTTQDKQNIIKENQQSEGDTGSP).

It belongs to the universal ribosomal protein uS15 family. As to quaternary structure, part of the 30S ribosomal subunit. Forms a bridge to the 50S subunit in the 70S ribosome, contacting the 23S rRNA.

Functionally, one of the primary rRNA binding proteins, it binds directly to 16S rRNA where it helps nucleate assembly of the platform of the 30S subunit by binding and bridging several RNA helices of the 16S rRNA. Forms an intersubunit bridge (bridge B4) with the 23S rRNA of the 50S subunit in the ribosome. This Francisella philomiragia subsp. philomiragia (strain ATCC 25017 / CCUG 19701 / FSC 153 / O#319-036) protein is Small ribosomal subunit protein uS15.